The sequence spans 69 residues: Probable molybdenum-pterin-binding protein (69 aa).

The Mop domain occupies 2 to 68 (KISARNQLKG…IKATSVMVGV (67 aa)).

This sequence to C.pasteurianum MOP proteins.

Its function is as follows. Binds one mole of molybdenum per mole of protein and contains a pterin. The chain is Probable molybdenum-pterin-binding protein from Haemophilus influenzae (strain ATCC 51907 / DSM 11121 / KW20 / Rd).